The primary structure comprises 337 residues: F420-dependent glucose-6-phosphate dehydrogenase (337 aa).

Position 44 (Asp-44) interacts with coenzyme F420-(gamma-Glu)n. His-45 acts as the Proton donor in catalysis. Residues Thr-81 and 112–113 (TG) each bind coenzyme F420-(gamma-Glu)n. Glu-114 functions as the Proton acceptor in the catalytic mechanism. Coenzyme F420-(gamma-Glu)n contacts are provided by residues Asn-117, 180 to 181 (GG), and 183 to 184 (GV). Residues Thr-198, Lys-201, Lys-262, and Arg-286 each contribute to the substrate site.

Belongs to the F420-dependent glucose-6-phosphate dehydrogenase family. Homodimer.

It catalyses the reaction oxidized coenzyme F420-(gamma-L-Glu)(n) + D-glucose 6-phosphate + H(+) = 6-phospho-D-glucono-1,5-lactone + reduced coenzyme F420-(gamma-L-Glu)(n). Its function is as follows. Catalyzes the coenzyme F420-dependent oxidation of glucose 6-phosphate (G6P) to 6-phosphogluconolactone. This chain is F420-dependent glucose-6-phosphate dehydrogenase, found in Kineococcus radiotolerans (strain ATCC BAA-149 / DSM 14245 / SRS30216).